A 429-amino-acid polypeptide reads, in one-letter code: MRKFDKSIAAFEEAQDLMPGGVNSPVRAFKSVGMNPLFMERGKGSKVYDIDGNEYIDYVLSWGPLIHGHANDRVVEALKAVAERGTSFGAPTEIENKLAKLVIERVPSIEIVRMVNSGTEATMSALRLARGYTGRNKILKFIGCYHGHGDSLLIKAGSGVATLGLPDSPGVPEGVAKNTITVAYNDLESVKYAFEQFGDDIACVIVEPVAGNMGVVPPQPGFLEGLREVTEQNGALLIFDEVMTGFRVAYNCGQGYYGVTPDLTCLGKVIGGGLPVGAYGGKAEIMRQVAPSGPIYQAGTLSGNPLAMAAGYETLVQLTPESYVEFERKAEMLEAGLRKAAEKHGIPHHINRAGSMIGIFFTDEPVINYDAAKSSNLQFFAAYYREMVEQGVFLPPSQFEGLFLSTAHSDADIEATIAAAEIAMSKLKA.

Position 268 is an N6-(pyridoxal phosphate)lysine (lysine 268).

This sequence belongs to the class-III pyridoxal-phosphate-dependent aminotransferase family. HemL subfamily. As to quaternary structure, homodimer. The cofactor is pyridoxal 5'-phosphate.

It localises to the cytoplasm. The enzyme catalyses (S)-4-amino-5-oxopentanoate = 5-aminolevulinate. It participates in porphyrin-containing compound metabolism; protoporphyrin-IX biosynthesis; 5-aminolevulinate from L-glutamyl-tRNA(Glu): step 2/2. The polypeptide is Glutamate-1-semialdehyde 2,1-aminomutase 2 (Bacillus cereus (strain AH820)).